A 278-amino-acid polypeptide reads, in one-letter code: Alcohol dehydrogenase-related 31 kDa protein (278 aa).

NAD(+) is bound at residue 11–34 (YVADCGGIALETSKVLMTKNIAKL). Residue S139 participates in substrate binding. The active-site Proton acceptor is the Y152.

Belongs to the short-chain dehydrogenases/reductases (SDR) family.

The polypeptide is Alcohol dehydrogenase-related 31 kDa protein (Adhr) (Drosophila persimilis (Fruit fly)).